We begin with the raw amino-acid sequence, 622 residues long: Chaperone protein HscA homolog (622 aa).

It belongs to the heat shock protein 70 family.

Functionally, chaperone involved in the maturation of iron-sulfur cluster-containing proteins. Has a low intrinsic ATPase activity which is markedly stimulated by HscB. The protein is Chaperone protein HscA homolog of Acidovorax sp. (strain JS42).